The sequence spans 229 residues: Urease accessory protein UreF (229 aa).

The protein belongs to the UreF family. In terms of assembly, ureD, UreF and UreG form a complex that acts as a GTP-hydrolysis-dependent molecular chaperone, activating the urease apoprotein by helping to assemble the nickel containing metallocenter of UreC. The UreE protein probably delivers the nickel.

It localises to the cytoplasm. Functionally, required for maturation of urease via the functional incorporation of the urease nickel metallocenter. The polypeptide is Urease accessory protein UreF (Staphylococcus aureus (strain JH1)).